A 335-amino-acid polypeptide reads, in one-letter code: Cytoskeleton protein RodZ (335 aa).

Residues 1–111 lie on the Cytoplasmic side of the membrane; that stretch reads MNTEATHDQN…LGKRRKKRDG (111 aa). The 53-residue stretch at 19–71 folds into the HTH cro/C1-type domain; sequence LRNAREQLGLSQQAVAERLCLKVSTVRDIEEDKAPADLASTFLRGYIRSYARL. Residues 30-49 constitute a DNA-binding region (H-T-H motif); it reads QQAVAERLCLKVSTVRDIEE. Residues 112 to 132 traverse the membrane as a helical; Signal-anchor for type II membrane protein segment; that stretch reads WLMTFTWLVLFVVIGLSGAWW. Residues 133 to 335 lie on the Periplasmic side of the membrane; that stretch reads WQDHKAQQEE…TLNAEQSPAQ (203 aa). Residues 148–164 show a composition bias toward polar residues; that stretch reads DQSSAELNNNQSQSVPL. Positions 148-244 are disordered; that stretch reads DQSSAELNNN…PLPTDQAGVT (97 aa). Composition is skewed to low complexity over residues 165 to 205 and 217 to 239; these read DTST…DPQQ and DTAATPAPAATTTPDGAAPLPTD.

The protein belongs to the RodZ family.

It localises to the cell inner membrane. Functionally, cytoskeletal protein that is involved in cell-shape control through regulation of the length of the long axis. This chain is Cytoskeleton protein RodZ, found in Escherichia coli O6:H1 (strain CFT073 / ATCC 700928 / UPEC).